The primary structure comprises 274 residues: 3-methyl-2-oxobutanoate hydroxymethyltransferase (274 aa).

Positions 46 and 85 each coordinate Mg(2+). Residues 46–47 (DS), aspartate 85, and lysine 115 contribute to the 3-methyl-2-oxobutanoate site. Glutamate 117 is a binding site for Mg(2+). Residue glutamate 184 is the Proton acceptor of the active site.

The protein belongs to the PanB family. Homodecamer; pentamer of dimers. Mg(2+) serves as cofactor.

The protein resides in the cytoplasm. The enzyme catalyses 3-methyl-2-oxobutanoate + (6R)-5,10-methylene-5,6,7,8-tetrahydrofolate + H2O = 2-dehydropantoate + (6S)-5,6,7,8-tetrahydrofolate. It functions in the pathway cofactor biosynthesis; coenzyme A biosynthesis. Its function is as follows. Catalyzes the reversible reaction in which hydroxymethyl group from 5,10-methylenetetrahydrofolate is transferred onto alpha-ketoisovalerate to form ketopantoate. The protein is 3-methyl-2-oxobutanoate hydroxymethyltransferase of Halobacterium salinarum (strain ATCC 29341 / DSM 671 / R1).